A 271-amino-acid chain; its full sequence is Zinc finger CCHC domain-containing protein 9 (271 aa).

The disordered stretch occupies residues 1–67 (MTRWARVTTS…RKKNKKKKEY (67 aa)). A compositionally biased stretch (polar residues) spans 7 to 20 (VTTSNSKRPLSATS). A compositionally biased stretch (basic and acidic residues) spans 22 to 33 (EDMKKGSVERAD). The span at 35–46 (SLPNRKQCQSSR) shows a compositional bias: polar residues. Residues 56 to 65 (AKRKKNKKKK) show a composition bias toward basic residues. 4 CCHC-type zinc fingers span residues 128 to 145 (MVCFHCRQPGHGIADCPA), 155 to 172 (GICYRCGSTEHEMSKCRA), 184 to 201 (AKCFVCGEMGHLSRSCPD), and 211 to 228 (GSCKLCGSVEHFKKDCRE).

Detected in brain cortex and in testis.

It localises to the nucleus. The protein resides in the nucleolus. Its function is as follows. May down-regulate transcription mediated by NF-kappa-B and the serum response element. The sequence is that of Zinc finger CCHC domain-containing protein 9 (Zcchc9) from Mus musculus (Mouse).